The sequence spans 345 residues: MVHNKNNTILKMIKGEETSHTPVWFMRQAGRSQPEYRKLKEKYSLFDITHQPELCAYVTHLPVDNYHTDAAILYKDIMTPLKPIGVDVEIKSGIGPVIHNPIKTIQDVEKLSQIDPERDVPYVLDTIKLLTEEKLNVPLIGFTGAPFTLASYMIEGGPSKNYNFTKAMMYRDEATWFALMNHLVDVSVKYVTAQVEAGAELIQIFDSWVGALNVEDYRRYIKPHMIRLISEVKEKHDVPVILFGVGASHLINEWNDLPIDVLGLDWRTSINQAQQLGVTKTLQGNLDPSILLAPWNVIEERLKPILDQGMENGKHIFNLGHGVFPEVQPETLRKVSEFVHTYTQR.

Substrate is bound by residues 27 to 31 (RQAGR), F46, D76, Y152, S207, and H321.

This sequence belongs to the uroporphyrinogen decarboxylase family. As to quaternary structure, homodimer.

Its subcellular location is the cytoplasm. The enzyme catalyses uroporphyrinogen III + 4 H(+) = coproporphyrinogen III + 4 CO2. It participates in porphyrin-containing compound metabolism; protoporphyrin-IX biosynthesis; coproporphyrinogen-III from 5-aminolevulinate: step 4/4. Its function is as follows. Catalyzes the decarboxylation of four acetate groups of uroporphyrinogen-III to yield coproporphyrinogen-III. In Staphylococcus aureus (strain Mu3 / ATCC 700698), this protein is Uroporphyrinogen decarboxylase.